The chain runs to 392 residues: Extracellular metalloproteinase 4 (392 aa).

Residues 1–9 constitute a propeptide that is removed on maturation; the sequence is VHSVVDYVS. Residues Asn-27 and Asn-176 are each glycosylated (N-linked (GlcNAc...) asparagine). Position 193 (His-193) interacts with Zn(2+). Glu-194 is an active-site residue. His-197 serves as a coordination point for Zn(2+). N-linked (GlcNAc...) asparagine glycosylation is found at Asn-359 and Asn-385.

This sequence belongs to the peptidase M36 family. It depends on Zn(2+) as a cofactor.

The protein resides in the secreted. Secreted metalloproteinase probably acting as a virulence factor. The sequence is that of Extracellular metalloproteinase 4 (MEP4) from Trichophyton violaceum.